The sequence spans 214 residues: Ribonuclease HII (214 aa).

The region spanning 26-214 (EIVCGVDEAG…PVREAFDLIR (189 aa)) is the RNase H type-2 domain. A divalent metal cation is bound by residues D32, E33, and D124.

This sequence belongs to the RNase HII family. Mn(2+) serves as cofactor. Requires Mg(2+) as cofactor.

It localises to the cytoplasm. It catalyses the reaction Endonucleolytic cleavage to 5'-phosphomonoester.. Endonuclease that specifically degrades the RNA of RNA-DNA hybrids. In Burkholderia mallei (strain NCTC 10247), this protein is Ribonuclease HII.